Here is a 391-residue protein sequence, read N- to C-terminus: Rhizopuspepsin-3 (391 aa).

An N-terminal signal peptide occupies residues 1-21 (MKFTLISSCVTLALMTLSIEA). A propeptide spans 22–68 (APSGKKVNIPLTKNKDYKPNAKNAIQKAIAKYHRHRSVSSSNSTSTD) (activation peptide). Residues 84-388 (YYGEVTVGTP…NPEVPHVQIA (305 aa)) form the Peptidase A1 domain. D102 is a catalytic residue. A disulfide bridge links C115 with C118. The active site involves D285. C319 and C352 are joined by a disulfide.

The protein belongs to the peptidase A1 family.

It catalyses the reaction Hydrolysis of proteins with broad specificity similar to that of pepsin A, preferring hydrophobic residues at P1 and P1'. Clots milk and activates trypsinogen. Does not cleave 4-Gln-|-His-5, but does cleave 10-His-|-Leu-11 and 12-Val-|-Glu-13 in B chain of insulin.. This is Rhizopuspepsin-3 from Rhizopus niveus.